The sequence spans 188 residues: dCTP deaminase (188 aa).

Residues 111–116 (KSTYAR), 135–137 (TLE), Gln-156, Tyr-170, and Gln-180 contribute to the dCTP site. Glu-137 serves as the catalytic Proton donor/acceptor.

The protein belongs to the dCTP deaminase family. As to quaternary structure, homotrimer.

The catalysed reaction is dCTP + H2O + H(+) = dUTP + NH4(+). It participates in pyrimidine metabolism; dUMP biosynthesis; dUMP from dCTP (dUTP route): step 1/2. In terms of biological role, catalyzes the deamination of dCTP to dUTP. The polypeptide is dCTP deaminase (Neisseria meningitidis serogroup C / serotype 2a (strain ATCC 700532 / DSM 15464 / FAM18)).